The sequence spans 652 residues: Acetyl-coenzyme A synthetase (652 aa).

CoA is bound by residues 189–192 (RGGK), T311, and N335. Residues 387-389 (GEP), 411-416 (DTWWQT), D500, and R515 contribute to the ATP site. S523 contacts CoA. R526 contributes to the ATP binding site. Positions 537, 539, and 542 each coordinate Mg(2+). CoA is bound at residue R584. K609 carries the N6-acetyllysine modification.

The protein belongs to the ATP-dependent AMP-binding enzyme family. It depends on Mg(2+) as a cofactor. Post-translationally, acetylated. Deacetylation by the SIR2-homolog deacetylase activates the enzyme.

The catalysed reaction is acetate + ATP + CoA = acetyl-CoA + AMP + diphosphate. Its function is as follows. Catalyzes the conversion of acetate into acetyl-CoA (AcCoA), an essential intermediate at the junction of anabolic and catabolic pathways. AcsA undergoes a two-step reaction. In the first half reaction, AcsA combines acetate with ATP to form acetyl-adenylate (AcAMP) intermediate. In the second half reaction, it can then transfer the acetyl group from AcAMP to the sulfhydryl group of CoA, forming the product AcCoA. The chain is Acetyl-coenzyme A synthetase from Rhizobium rhizogenes (strain K84 / ATCC BAA-868) (Agrobacterium radiobacter).